Reading from the N-terminus, the 231-residue chain is uncharacterized protein (231 aa).

This is an uncharacterized protein from Haemophilus influenzae (strain ATCC 51907 / DSM 11121 / KW20 / Rd).